We begin with the raw amino-acid sequence, 120 residues long: Ribonuclease P protein component 2 (120 aa).

Belongs to the eukaryotic/archaeal RNase P protein component 2 family. Homodimer in solution. Component of RNase P which consists of a catalytic RNA component and at least 5 protein subunits. Forms a heterotetrameric subcomplex with Rnp3. Reconstituted enzyme missing individual protein subunits is suboptimally active, showing each subunit contributes to optimization of activity.

The protein resides in the cytoplasm. It catalyses the reaction Endonucleolytic cleavage of RNA, removing 5'-extranucleotides from tRNA precursor.. In terms of biological role, part of ribonuclease P, a protein complex that generates mature tRNA molecules by cleaving their 5'-ends. The polypeptide is Ribonuclease P protein component 2 (Pyrococcus horikoshii (strain ATCC 700860 / DSM 12428 / JCM 9974 / NBRC 100139 / OT-3)).